Consider the following 336-residue polypeptide: tRNA N6-adenosine threonylcarbamoyltransferase (336 aa).

Positions 112 and 116 each coordinate Fe cation. Substrate is bound by residues 136 to 140 (LVSGG), Asp-169, Gly-182, and Asn-276. Position 304 (Asp-304) interacts with Fe cation.

It belongs to the KAE1 / TsaD family. Fe(2+) serves as cofactor.

Its subcellular location is the cytoplasm. It carries out the reaction L-threonylcarbamoyladenylate + adenosine(37) in tRNA = N(6)-L-threonylcarbamoyladenosine(37) in tRNA + AMP + H(+). Its function is as follows. Required for the formation of a threonylcarbamoyl group on adenosine at position 37 (t(6)A37) in tRNAs that read codons beginning with adenine. Is involved in the transfer of the threonylcarbamoyl moiety of threonylcarbamoyl-AMP (TC-AMP) to the N6 group of A37, together with TsaE and TsaB. TsaD likely plays a direct catalytic role in this reaction. The sequence is that of tRNA N6-adenosine threonylcarbamoyltransferase from Francisella tularensis subsp. holarctica (strain FTNF002-00 / FTA).